The sequence spans 364 residues: tRNA-specific 2-thiouridylase MnmA 1 (364 aa).

ATP contacts are provided by residues 10–17 (GMSGGVDS) and Met-36. Cys-106 functions as the Nucleophile in the catalytic mechanism. A disulfide bridge connects residues Cys-106 and Cys-204. Gly-130 is a binding site for ATP. An interaction with tRNA region spans residues 154-156 (KDQ). Residue Cys-204 is the Cysteine persulfide intermediate of the active site. Residues 310–311 (RY) form an interaction with tRNA region.

The protein belongs to the MnmA/TRMU family.

It localises to the cytoplasm. It catalyses the reaction S-sulfanyl-L-cysteinyl-[protein] + uridine(34) in tRNA + AH2 + ATP = 2-thiouridine(34) in tRNA + L-cysteinyl-[protein] + A + AMP + diphosphate + H(+). Functionally, catalyzes the 2-thiolation of uridine at the wobble position (U34) of tRNA, leading to the formation of s(2)U34. The protein is tRNA-specific 2-thiouridylase MnmA 1 of Thermoanaerobacter sp. (strain X514).